Here is a 459-residue protein sequence, read N- to C-terminus: Protein king tubby (459 aa).

Positions 114-205 are disordered; it reads HELEDEESSP…SNGAGGESEG (92 aa). Positions 123–155 are enriched in polar residues; sequence PVTVIEQQQTAPHSANSTHSQRPSTTRQPSFND. The residue at position 152 (Ser152) is a Phosphoserine.

The protein belongs to the TUB family.

The protein resides in the cytoplasm. The protein localises to the nucleus. It localises to the cell projection. Its subcellular location is the cilium membrane. It is found in the rhabdomere. The protein is Protein king tubby of Drosophila persimilis (Fruit fly).